We begin with the raw amino-acid sequence, 297 residues long: uncharacterized protein (297 aa).

2 helical membrane passes run 17 to 37 and 48 to 68; these read LALSGGGFYGFAVVGALKEIF and TISGVSVGSIIATMLAIGYSI. Residues 17–196 enclose the PNPLA domain; the sequence is LALSGGGFYG…TLNYPITLFD (180 aa). Positions 21–26 match the GXGXXG motif; it reads GGGFYG. The GXSXG signature appears at 51 to 55; sequence GVSVG. Residue Ser53 is the Nucleophile of the active site. Asn122 is a glycosylation site (N-linked (GlcNAc...) asparagine; by host). Catalysis depends on Asp183, which acts as the Proton acceptor. Residues 183–185 carry the DGA/G motif; the sequence is DGG. Asn239 is a glycosylation site (N-linked (GlcNAc...) asparagine; by host).

The protein resides in the membrane. Functionally, probable lipid hydrolase. This is an uncharacterized protein from Acanthamoeba polyphaga mimivirus (APMV).